A 497-amino-acid polypeptide reads, in one-letter code: Probable malate:quinone oxidoreductase (497 aa).

The protein belongs to the MQO family. Requires FAD as cofactor.

It catalyses the reaction (S)-malate + a quinone = a quinol + oxaloacetate. It functions in the pathway carbohydrate metabolism; tricarboxylic acid cycle; oxaloacetate from (S)-malate (quinone route): step 1/1. The polypeptide is Probable malate:quinone oxidoreductase (Exiguobacterium sibiricum (strain DSM 17290 / CCUG 55495 / CIP 109462 / JCM 13490 / 255-15)).